A 232-amino-acid polypeptide reads, in one-letter code: uncharacterized protein (232 aa).

The N-terminal stretch at 1 to 32 (MTTSKIATAFKTATFALAAGAVALGLASPADA) is a signal peptide.

This is an uncharacterized protein from Mycobacterium bovis (strain ATCC BAA-935 / AF2122/97).